The primary structure comprises 339 residues: Anthranilate phosphoribosyltransferase (339 aa).

5-phospho-alpha-D-ribose 1-diphosphate contacts are provided by residues Gly79, 82–83 (GD), Ser87, 89–92 (NIST), 107–115 (KHGNRSVSS), and Ser119. Gly79 provides a ligand contact to anthranilate. Ser91 contributes to the Mg(2+) binding site. Asn110 provides a ligand contact to anthranilate. Anthranilate is bound at residue Arg165. 2 residues coordinate Mg(2+): Asp224 and Glu225.

This sequence belongs to the anthranilate phosphoribosyltransferase family. Homodimer. The cofactor is Mg(2+).

The enzyme catalyses N-(5-phospho-beta-D-ribosyl)anthranilate + diphosphate = 5-phospho-alpha-D-ribose 1-diphosphate + anthranilate. It functions in the pathway amino-acid biosynthesis; L-tryptophan biosynthesis; L-tryptophan from chorismate: step 2/5. Functionally, catalyzes the transfer of the phosphoribosyl group of 5-phosphorylribose-1-pyrophosphate (PRPP) to anthranilate to yield N-(5'-phosphoribosyl)-anthranilate (PRA). The polypeptide is Anthranilate phosphoribosyltransferase (Exiguobacterium sibiricum (strain DSM 17290 / CCUG 55495 / CIP 109462 / JCM 13490 / 255-15)).